The following is a 1171-amino-acid chain: Phytochrome B (1171 aa).

Over residues 1-19 (MASGSRATPTRSPSSARPA) the composition is skewed to low complexity. The disordered stretch occupies residues 1 to 53 (MASGSRATPTRSPSSARPAAPRHQHHHSQSSGGSTSRAGGGGGGGGGGGGGAA). Residues 38 to 52 (AGGGGGGGGGGGGGA) are compositionally biased toward gly residues. Residues 259-442 (DVKLLCDTVV…AFGLQLNMEL (184 aa)) enclose the GAF domain. Phytochromobilin is bound at residue Cys-364. PAS domains are found at residues 661 to 732 (VARE…LRGD) and 795 to 866 (DYKA…MIVL). Residues 943–1161 (YIYQEIKNPL…FFHIVLELPQ (219 aa)) enclose the Histidine kinase domain.

This sequence belongs to the phytochrome family. As to quaternary structure, homodimer. Contains one covalently linked phytochromobilin chromophore.

Its function is as follows. Regulatory photoreceptor which exists in two forms that are reversibly interconvertible by light: the Pr form that absorbs maximally in the red region of the spectrum and the Pfr form that absorbs maximally in the far-red region. Photoconversion of Pr to Pfr induces an array of morphogenic responses, whereas reconversion of Pfr to Pr cancels the induction of those responses. Pfr controls the expression of a number of nuclear genes including those encoding the small subunit of ribulose-bisphosphate carboxylase, chlorophyll A/B binding protein, protochlorophyllide reductase, rRNA, etc. It also controls the expression of its own gene(s) in a negative feedback fashion. This is Phytochrome B (PHYB) from Oryza sativa subsp. indica (Rice).